The primary structure comprises 338 residues: Holliday junction branch migration complex subunit RuvB (338 aa).

The segment covering 1-14 has biased composition (basic and acidic residues); it reads MENDHGILSDHPSG. The disordered stretch occupies residues 1 to 21; it reads MENDHGILSDHPSGEEESQVE. Residues 3-185 are large ATPase domain (RuvB-L); the sequence is NDHGILSDHP…FGIVEHMNYY (183 aa). ATP contacts are provided by residues L24, R25, G66, K69, T70, T71, 132–134, R175, Y185, and R222; that span reads EDY. T70 is a binding site for Mg(2+). A small ATPAse domain (RuvB-S) region spans residues 186 to 256; the sequence is TQDELTKIIF…IVKQALSLLQ (71 aa). The tract at residues 259–338 is head domain (RuvB-H); that stretch reads DRGLDEIDRK…LGIEYPTDKN (80 aa). Positions 314 and 319 each coordinate DNA.

It belongs to the RuvB family. Homohexamer. Forms an RuvA(8)-RuvB(12)-Holliday junction (HJ) complex. HJ DNA is sandwiched between 2 RuvA tetramers; dsDNA enters through RuvA and exits via RuvB. An RuvB hexamer assembles on each DNA strand where it exits the tetramer. Each RuvB hexamer is contacted by two RuvA subunits (via domain III) on 2 adjacent RuvB subunits; this complex drives branch migration. In the full resolvosome a probable DNA-RuvA(4)-RuvB(12)-RuvC(2) complex forms which resolves the HJ.

It is found in the cytoplasm. The catalysed reaction is ATP + H2O = ADP + phosphate + H(+). In terms of biological role, the RuvA-RuvB-RuvC complex processes Holliday junction (HJ) DNA during genetic recombination and DNA repair, while the RuvA-RuvB complex plays an important role in the rescue of blocked DNA replication forks via replication fork reversal (RFR). RuvA specifically binds to HJ cruciform DNA, conferring on it an open structure. The RuvB hexamer acts as an ATP-dependent pump, pulling dsDNA into and through the RuvAB complex. RuvB forms 2 homohexamers on either side of HJ DNA bound by 1 or 2 RuvA tetramers; 4 subunits per hexamer contact DNA at a time. Coordinated motions by a converter formed by DNA-disengaged RuvB subunits stimulates ATP hydrolysis and nucleotide exchange. Immobilization of the converter enables RuvB to convert the ATP-contained energy into a lever motion, pulling 2 nucleotides of DNA out of the RuvA tetramer per ATP hydrolyzed, thus driving DNA branch migration. The RuvB motors rotate together with the DNA substrate, which together with the progressing nucleotide cycle form the mechanistic basis for DNA recombination by continuous HJ branch migration. Branch migration allows RuvC to scan DNA until it finds its consensus sequence, where it cleaves and resolves cruciform DNA. This is Holliday junction branch migration complex subunit RuvB from Limosilactobacillus reuteri (strain DSM 20016) (Lactobacillus reuteri).